A 421-amino-acid polypeptide reads, in one-letter code: Serine hydroxymethyltransferase (421 aa).

(6S)-5,6,7,8-tetrahydrofolate-binding positions include L121 and 125–127; that span reads GHL. K230 bears the N6-(pyridoxal phosphate)lysine mark.

Belongs to the SHMT family. In terms of assembly, homodimer. Pyridoxal 5'-phosphate is required as a cofactor.

The protein localises to the cytoplasm. The enzyme catalyses (6R)-5,10-methylene-5,6,7,8-tetrahydrofolate + glycine + H2O = (6S)-5,6,7,8-tetrahydrofolate + L-serine. Its pathway is one-carbon metabolism; tetrahydrofolate interconversion. It functions in the pathway amino-acid biosynthesis; glycine biosynthesis; glycine from L-serine: step 1/1. Its function is as follows. Catalyzes the reversible interconversion of serine and glycine with tetrahydrofolate (THF) serving as the one-carbon carrier. This reaction serves as the major source of one-carbon groups required for the biosynthesis of purines, thymidylate, methionine, and other important biomolecules. Also exhibits THF-independent aldolase activity toward beta-hydroxyamino acids, producing glycine and aldehydes, via a retro-aldol mechanism. In Carboxydothermus hydrogenoformans (strain ATCC BAA-161 / DSM 6008 / Z-2901), this protein is Serine hydroxymethyltransferase.